A 234-amino-acid polypeptide reads, in one-letter code: Probable septum site-determining protein MinC (234 aa).

Belongs to the MinC family. Interacts with MinD and FtsZ.

Functionally, cell division inhibitor that blocks the formation of polar Z ring septums. Rapidly oscillates between the poles of the cell to destabilize FtsZ filaments that have formed before they mature into polar Z rings. Prevents FtsZ polymerization. The polypeptide is Probable septum site-determining protein MinC (Pseudoalteromonas translucida (strain TAC 125)).